Here is a 1226-residue protein sequence, read N- to C-terminus: Probable DNA-binding protein SNT1 (1226 aa).

Disordered regions lie at residues 1–219 (MGYP…YSRS) and 264–331 (LKST…PDNI). Positions 11–27 (GDKKRYHYSNNPNRRHP) are enriched in basic residues. Residues 31–64 (YSKNSFPKSSNNGFVSSPTADNSTNPSVTPSTAS) show a composition bias toward polar residues. Low complexity-rich tracts occupy residues 81–103 (PRPS…SSTR) and 116–131 (SSST…NTST). Polar residues-rich tracts occupy residues 132-143 (ITHTNTDIGNSR) and 150-170 (SRYN…SALS). A Phosphoserine modification is found at Ser-187. Low complexity predominate over residues 202–211 (NNVSSVNNNS). Residues 264 to 275 (LKSTHSQSSPSL) are compositionally biased toward polar residues. The span at 280–304 (FHDANKLDKPEASVKVETPSKDETK) shows a compositional bias: basic and acidic residues. A Phosphoserine modification is found at Ser-395. A coiled-coil region spans residues 539 to 591 (DLQKKYEKECEILTKLSENLRKEEIENKRKEHELMEQKRREEGIETEKEKSLR). A compositionally biased stretch (basic and acidic residues) spans 569-590 (EHELMEQKRREEGIETEKEKSL). A disordered region spans residues 569 to 605 (EHELMEQKRREEGIETEKEKSLRHPSSSSSSRRRNRA). Residues 668 to 720 (DASDNFTDHEHSLFLEGYLIHPKKFGKISHYMGGLRSPEECVLHYYRTKKTVN) enclose the SANT domain. The span at 732 to 745 (RKMSAAAKRRKRKE) shows a compositional bias: basic residues. Residues 732–796 (RKMSAAAKRR…SEVKGDPLGT (65 aa)) are disordered. Residues 748–758 (NDEEVEVDESK) show a composition bias toward acidic residues. Residues 759 to 773 (EESTNTIEKEEKSEN) show a composition bias toward basic and acidic residues. Thr-796 is modified (phosphothreonine). Residues 884 to 938 (APEHKTSYWSVRESQLFPELLKEFGSQWSLISEKLGTKSTTMVRNYYQRNAARNG) form the HTH myb-type domain. The segment at residues 911–934 (WSLISEKLGTKSTTMVRNYYQRNA) is a DNA-binding region (H-T-H motif). Residue Ser-1037 is modified to Phosphoserine. A disordered region spans residues 1172-1194 (SQGTPTFPLPAPRTSPISRAPPK).

As to quaternary structure, identified in a Set3C complex with SET3, HST1, HOS2, SIF2, CPR1 and HOS4.

It is found in the nucleus. Functionally, part of the Set3C complex, which is required to repress early/middle sporulation genes during meiosis. The chain is Probable DNA-binding protein SNT1 (SNT1) from Saccharomyces cerevisiae (strain ATCC 204508 / S288c) (Baker's yeast).